The sequence spans 640 residues: Threonine--tRNA ligase (640 aa).

Residues 1–60 (MKITFPDGAVKEFEPGVSTADIAASISPGLKKKALAGKLNGELLDLVTPIHEDGAIEIVT) form the TGS domain. The interval 241 to 538 (DHRKLGKELE…LIEEYKGAFP (298 aa)) is catalytic. Zn(2+)-binding residues include cysteine 334, histidine 385, and histidine 515.

Belongs to the class-II aminoacyl-tRNA synthetase family. In terms of assembly, homodimer. Requires Zn(2+) as cofactor.

The protein localises to the cytoplasm. It carries out the reaction tRNA(Thr) + L-threonine + ATP = L-threonyl-tRNA(Thr) + AMP + diphosphate + H(+). Functionally, catalyzes the attachment of threonine to tRNA(Thr) in a two-step reaction: L-threonine is first activated by ATP to form Thr-AMP and then transferred to the acceptor end of tRNA(Thr). Also edits incorrectly charged L-seryl-tRNA(Thr). This Listeria monocytogenes serovar 1/2a (strain ATCC BAA-679 / EGD-e) protein is Threonine--tRNA ligase.